Consider the following 398-residue polypeptide: MSERKLFTSESVSEGHPDKIADQISDAILDAILEQDPDAHVAAETAVYTGSVHVFGEISTTAYVDINRVVRNTIAEIGYDKAEYGFSAESVGVHPSLVEQSPDIAQGVNEALEVRGSLEQDPLDLIGAGDQGLMFGFAVDETPELMPLPISLAHQLVKKLTDLRKSGELTYLRPDAKSQVTVEYDENNQPIRVDAVVISTQHDPNVTNDQLHKDVIEKVINEVIPSHYLDDQTKFFINPTGRFVIGGPQGDSGLTGRKIIVDTYGGYSRHGGGAFSGKDATKVDRSASYAARYIAKNIVAADLAKKVEVQLAYAIGVAQPVSVRVDTFGTGVIAEADLEAAVRQIFDLRPAGIINMLDLKRPIYRQTAAYGHMGRTDIDLPWERVDKVQALKDFIASK.

Histidine 16 is an ATP binding site. Aspartate 18 is a Mg(2+) binding site. Glutamate 44 lines the K(+) pocket. Positions 57 and 100 each coordinate L-methionine. Residues 100–110 (QSPDIAQGVNE) form a flexible loop region. Residues 175 to 177 (DAK), 242 to 243 (RF), aspartate 251, 257 to 258 (RK), alanine 274, and lysine 278 each bind ATP. Aspartate 251 serves as a coordination point for L-methionine. Residue lysine 282 participates in L-methionine binding.

The protein belongs to the AdoMet synthase family. As to quaternary structure, homotetramer; dimer of dimers. The cofactor is Mg(2+). Requires K(+) as cofactor.

Its subcellular location is the cytoplasm. The enzyme catalyses L-methionine + ATP + H2O = S-adenosyl-L-methionine + phosphate + diphosphate. The protein operates within amino-acid biosynthesis; S-adenosyl-L-methionine biosynthesis; S-adenosyl-L-methionine from L-methionine: step 1/1. Its function is as follows. Catalyzes the formation of S-adenosylmethionine (AdoMet) from methionine and ATP. The overall synthetic reaction is composed of two sequential steps, AdoMet formation and the subsequent tripolyphosphate hydrolysis which occurs prior to release of AdoMet from the enzyme. This is S-adenosylmethionine synthase from Streptococcus agalactiae serotype III (strain NEM316).